We begin with the raw amino-acid sequence, 657 residues long: Iron-sulfur cluster biogenesis chaperone, mitochondrial (657 aa).

Belongs to the heat shock protein 70 family. Interacts with the Fe/S cluster assembly proteins ISU1, MGE1, GRX5 and JAC1.

The protein localises to the mitochondrion matrix. It carries out the reaction ATP + H2O = ADP + phosphate + H(+). Required for the assembly of iron-sulfur (Fe/S) clusters in mitochondria. Assisted by the DnaJ-like co-chaperone JAC1 and the nucleotide exchange factor MGE1, it mediates ATP-dependent Fe-S cluster transfer from the scaffold proteins ISU1/ISU2 to GRX5. This is Iron-sulfur cluster biogenesis chaperone, mitochondrial from Saccharomyces cerevisiae (strain ATCC 204508 / S288c) (Baker's yeast).